The primary structure comprises 359 residues: 5-amino-6-(D-ribitylamino)uracil--L-tyrosine 4-hydroxyphenyl transferase (359 aa).

A Radical SAM core domain is found at 45–282 (VTYVLNANIN…VYAISRIFFK (238 aa)). Residues Cys59, Cys63, and Cys66 each coordinate [4Fe-4S] cluster.

It belongs to the radical SAM superfamily. CofH family. In terms of assembly, consists of two subunits, CofG and CofH. Requires [4Fe-4S] cluster as cofactor.

It carries out the reaction 5-amino-6-(D-ribitylamino)uracil + L-tyrosine + S-adenosyl-L-methionine = 5-amino-5-(4-hydroxybenzyl)-6-(D-ribitylimino)-5,6-dihydrouracil + 2-iminoacetate + 5'-deoxyadenosine + L-methionine + H(+). The protein operates within cofactor biosynthesis; coenzyme F0 biosynthesis. In terms of biological role, catalyzes the radical-mediated synthesis of 5-amino-5-(4-hydroxybenzyl)-6-(D-ribitylimino)-5,6-dihydrouracil from 5-amino-6-(D-ribitylamino)uracil and L-tyrosine. The polypeptide is 5-amino-6-(D-ribitylamino)uracil--L-tyrosine 4-hydroxyphenyl transferase (Methanococcus vannielii (strain ATCC 35089 / DSM 1224 / JCM 13029 / OCM 148 / SB)).